Reading from the N-terminus, the 194-residue chain is Insertion element IS136 uncharacterized 21.2 kDa protein (194 aa).

A disordered region spans residues 73–103 (SCDRACAPTPGRDPPVSSLPNSRQPARQNPR). Residues 90 to 103 (SLPNSRQPARQNPR) are compositionally biased toward polar residues.

This Agrobacterium tumefaciens (strain T37) protein is Insertion element IS136 uncharacterized 21.2 kDa protein.